The sequence spans 106 residues: uncharacterized protein (106 aa).

Belongs to the SUI1 family.

This is an uncharacterized protein from Haemophilus influenzae (strain ATCC 51907 / DSM 11121 / KW20 / Rd).